Consider the following 302-residue polypeptide: Sulfate adenylyltransferase subunit 2 (302 aa).

It belongs to the PAPS reductase family. CysD subfamily. As to quaternary structure, heterodimer composed of CysD, the smaller subunit, and CysN.

The enzyme catalyses sulfate + ATP + H(+) = adenosine 5'-phosphosulfate + diphosphate. It functions in the pathway sulfur metabolism; hydrogen sulfide biosynthesis; sulfite from sulfate: step 1/3. Its function is as follows. With CysN forms the ATP sulfurylase (ATPS) that catalyzes the adenylation of sulfate producing adenosine 5'-phosphosulfate (APS) and diphosphate, the first enzymatic step in sulfur assimilation pathway. APS synthesis involves the formation of a high-energy phosphoric-sulfuric acid anhydride bond driven by GTP hydrolysis by CysN coupled to ATP hydrolysis by CysD. This Erwinia tasmaniensis (strain DSM 17950 / CFBP 7177 / CIP 109463 / NCPPB 4357 / Et1/99) protein is Sulfate adenylyltransferase subunit 2.